A 298-amino-acid polypeptide reads, in one-letter code: Probable alpha-L-glutamate ligase (298 aa).

The 183-residue stretch at 108-290 (LQLLLKTGVP…IAAEIIDYIE (183 aa)) folds into the ATP-grasp domain. Residues Lys144, 181 to 182 (DF), Asp190, and 214 to 216 (RAN) contribute to the ATP site. Residues Asp251, Glu263, and Asn265 each contribute to the Mg(2+) site. Residues Asp251, Glu263, and Asn265 each contribute to the Mn(2+) site.

Belongs to the RimK family. The cofactor is Mg(2+). It depends on Mn(2+) as a cofactor.

The chain is Probable alpha-L-glutamate ligase from Haemophilus influenzae (strain PittEE).